We begin with the raw amino-acid sequence, 335 residues long: Transmembrane protein 120B-B (335 aa).

A coiled-coil region spans residues Met1–Asn39. A run of 6 helical transmembrane segments spans residues Ser100 to Ser116, Phe130 to His150, Val157 to Ile177, Val193 to Phe213, Phe268 to Phe288, and Gln300 to Leu320.

This sequence belongs to the TMEM120 family.

The protein localises to the nucleus inner membrane. Its function is as follows. Necessary for efficient adipogenesis. Does not show ion channel activity. This chain is Transmembrane protein 120B-B (tmem120b-b), found in Xenopus laevis (African clawed frog).